The chain runs to 318 residues: Thymidylate synthase (318 aa).

DUMP is bound by residues R25 and 180 to 181 (RR). Residue C200 is the Nucleophile of the active site. DUMP is bound by residues 220–223 (RSGD), N231, and 261–263 (HIY). Residue D223 participates in (6R)-5,10-methylene-5,6,7,8-tetrahydrofolate binding. A (6R)-5,10-methylene-5,6,7,8-tetrahydrofolate-binding site is contributed by A317.

Belongs to the thymidylate synthase family. Bacterial-type ThyA subfamily. As to quaternary structure, homodimer.

The protein localises to the cytoplasm. It carries out the reaction dUMP + (6R)-5,10-methylene-5,6,7,8-tetrahydrofolate = 7,8-dihydrofolate + dTMP. It participates in pyrimidine metabolism; dTTP biosynthesis. Its function is as follows. Catalyzes the reductive methylation of 2'-deoxyuridine-5'-monophosphate (dUMP) to 2'-deoxythymidine-5'-monophosphate (dTMP) while utilizing 5,10-methylenetetrahydrofolate (mTHF) as the methyl donor and reductant in the reaction, yielding dihydrofolate (DHF) as a by-product. This enzymatic reaction provides an intracellular de novo source of dTMP, an essential precursor for DNA biosynthesis. This is Thymidylate synthase from Bacillus cereus (strain ATCC 14579 / DSM 31 / CCUG 7414 / JCM 2152 / NBRC 15305 / NCIMB 9373 / NCTC 2599 / NRRL B-3711).